Reading from the N-terminus, the 6885-residue chain is Nesprin-2 (6885 aa).

Residues 1–286 (MASSPELPTE…YVAQFLQYSK (286 aa)) form an actin-binding region. The Cytoplasmic portion of the chain corresponds to 1-6834 (MASSPELPTE…QRSFLSRVVR (6834 aa)). 2 Calponin-homology (CH) domains span residues 31–136 (DTQK…LHFH) and 181–286 (MSAR…QYSK). 7 Spectrin repeats span residues 297–378 (GKVK…HQIN), 379–472 (AWKI…RINN), 473–575 (ILEK…KNIY), 576–680 (NVKS…KQDQ), 735–838 (VAKD…KNLT), 839–932 (DVSP…LHHE), and 933–1034 (LSLY…KCAS). Residues 297-6782 (GKVKDAMGWL…PASPLPSFDE (6486 aa)) adopt a coiled-coil conformation. The residue at position 841 (Ser841) is a Phosphoserine. An N6-acetyllysine modification is found at Lys955. A compositionally biased stretch (polar residues) spans 1042 to 1059 (PTAGGTSKNEGTITTSEN). The disordered stretch occupies residues 1042 to 1084 (PTAGGTSKNEGTITTSENRGGDPHSEAPFAKSDNQPSTEKAME). Spectrin repeat units follow at residues 1121–1212 (TYRD…TLNT), 1263–1323 (NIQD…DTLK), 1324–1419 (ALED…YGVQ), 1420–1524 (EEFT…ALVT), 1525–1636 (ECLE…KTED), 1637–1738 (YYEN…TGES), 1739–1830 (NCHA…TKKS), 1831–1938 (VLQD…AKEL), 1939–2036 (EDSL…EEED), 2037–2132 (KLLP…LAST), 2133–2243 (YLSH…SVQN), and 2244–2360 (LDGH…LNSI). Positions 2368–2382 (EKKGKFTLPGREKQA) are enriched in basic and acidic residues. Positions 2368–2394 (EKKGKFTLPGREKQATSDVQESTQESA) are disordered. Positions 2383-2393 (TSDVQESTQES) are enriched in polar residues. 16 Spectrin repeats span residues 2432-2513 (DERK…TLKK), 2514-2620 (NKES…KYSQ), 2621-2717 (QVVE…ETLE), 2718-2831 (PLHL…QLEF), 2832-2933 (KLEE…FIQN), 2934-3036 (TCNE…EKIK), 3037-3142 (QLDT…NMVL), 3143-3248 (ELSP…DLRT), 3249-3352 (NVLN…AQET), 3353-3465 (EAER…MWCE), 3466-3573 (ELKQ…KVQK), 3574-3679 (NKEL…SNEV), 3680-3777 (LKSS…ECRT), 3778-3880 (SQLN…KIME), 3881-3986 (SLPQ…VTQE), and 3987-4086 (QNEL…LPAV). Ser2781 bears the Phosphoserine mark. Basic and acidic residues-rich tracts occupy residues 4073–4083 (QEQEGVERDRL) and 4093–4102 (VAERDASERK). 4 disordered regions span residues 4073–4162 (QEQE…SGTI), 4184–4232 (DSLN…KTRP), 4335–4363 (EKHSEDQHPTILKKSSEPEHQEALQPVNL), and 4416–4448 (HDNDTTQESSASNQASSPENDVPDSILSPQGQN). Ser4108 carries the post-translational modification Phosphoserine. Composition is skewed to basic and acidic residues over residues 4122 to 4134 (SSVKSDNGDEKAE) and 4144 to 4155 (WKHDKDMEEDRA). A Spectrin 36 repeat occupies 4229–4348 (KTRPEPTEVL…EDQHPTILKK (120 aa)). Over residues 4335-4356 (EKHSEDQHPTILKKSSEPEHQE) the composition is skewed to basic and acidic residues. A compositionally biased stretch (polar residues) spans 4421 to 4434 (TQESSASNQASSPE). Spectrin repeat units follow at residues 4520–4639 (NMTE…RSYQ), 4640–4727 (NEIK…RARY), 4728–4837 (TELS…QSLL), 4838–4943 (QKWE…QALL), 4944–5051 (KHLL…QEKL), 5052–5164 (HQLQ…KIQH), 5165–5266 (LEQL…TQVN), 5267–5391 (QLKT…KAYS), 5392–5487 (NAHG…MLLV), 5488–5589 (KANE…CSEL), 5590–5704 (QGIG…QWQD), 5705–5799 (FTTS…PQLA), 5800–5907 (EMIK…RVAI), 5908–6017 (RKQE…VKKL), 6018–6135 (KETF…EETW), 6136–6243 (RLWQ…LRHF), and 6244–6355 (TNQR…PGLE). Ser5785 bears the Phosphoserine mark. Residues 6354 to 6367 (LEDEKEASENETDM) show a composition bias toward acidic residues. The tract at residues 6354 to 6508 (LEDEKEASEN…GTDGGKEGPR (155 aa)) is disordered. A phosphoserine mark is found at Ser6361, Ser6384, Ser6411, Ser6428, Ser6429, Ser6430, and Ser6459. Positions 6368–6384 (EDPREIQTDSWRKRGES) are enriched in basic and acidic residues. 3 Spectrin repeats span residues 6461–6549 (SCPE…KLKI), 6550–6665 (KQNL…QCQD), and 6666–6782 (FHQL…SFDE). The span at 6463 to 6474 (PEHHYKQMEGDR) shows a compositional bias: basic and acidic residues. Pro residues predominate over residues 6477–6489 (PPVPPASSTPYKP). Positions 6490–6499 (PYGKLLLPPG) are enriched in low complexity. Residues 6769 to 6824 (GTQNPASPLPSFDEVDSGDQPPATSVPAPRAKQFRAVRTTEGEEETESRVPGSTRP) form a disordered region. The region spanning 6826–6885 (RSFLSRVVRAALPLQLLLLLLLLLACLLPSSEEDYSCTQANNFARSFYPMLRYTNGPPPT) is the KASH domain. The chain crosses the membrane as a helical; Anchor for type IV membrane protein span at residues 6835–6855 (AALPLQLLLLLLLLLACLLPS). The Perinuclear space segment spans residues 6856–6885 (SEEDYSCTQANNFARSFYPMLRYTNGPPPT). A sufficient for interaction with SUN2 region spans residues 6872-6885 (FYPMLRYTNGPPPT).

This sequence belongs to the nesprin family. Core component of LINC complexes which are composed of inner nuclear membrane SUN domain-containing proteins coupled to outer nuclear membrane KASH domain-containing nesprins. SUN and KASH domain-containing proteins seem to bind each other promiscuously; however, some LINC complex constituents are tissue- or cell type-specific. At least SUN1/2-containing core LINC complexes are proposed to be hexameric composed of three protomers of each KASH and SUN domain-containing protein. The SUN2:SYNE2/KASH2 complex is a heterohexamer; the homotrimeric cloverleave-like conformation of the SUN domain is a prerequisite for LINC complex formation in which three separate SYNE2/KASH2 peptides bind at the interface of adjacent SUN domains. Interacts with EMD, LMNA, MKS3 and F-actin via its N-terminal domain. Interacts with DCTN1 and DYNC1I1/2; suggesting the association with the dynein-dynactin motor complex. Associates with kinesin motor complexes. Interacts with TMEM67. Interacts (via KASH domain) with TMEM258. Interacts with BROX; this interaction promotes SYN2 ubiquitination and facilitates the relaxation of mechanical stress imposed by compressive actin fibers at the rupture site. Post-translationally, the disulfid bond with SUN2 is required for stability of the SUN2:SYNE2/KASH2 LINC complex under tensile forces though not required for the interaction. In terms of processing, ubiquitinated, targeting it for degradation. As to expression, widely expressed, with higher level in kidney, adult and fetal liver, stomach and placenta. Weakly expressed in skeletal muscle and brain. Isoform 5 is highly expressed in pancreas, skeletal muscle and heart.

It is found in the nucleus outer membrane. Its subcellular location is the sarcoplasmic reticulum membrane. The protein resides in the cell membrane. The protein localises to the cytoplasm. It localises to the cytoskeleton. It is found in the mitochondrion. Its subcellular location is the nucleus. The protein resides in the nucleoplasm. The protein localises to the myofibril. It localises to the sarcomere. It is found in the z line. Its subcellular location is the cell junction. The protein resides in the focal adhesion. Functionally, multi-isomeric modular protein which forms a linking network between organelles and the actin cytoskeleton to maintain the subcellular spatial organization. As a component of the LINC (LInker of Nucleoskeleton and Cytoskeleton) complex involved in the connection between the nuclear lamina and the cytoskeleton. The nucleocytoplasmic interactions established by the LINC complex play an important role in the transmission of mechanical forces across the nuclear envelope and in nuclear movement and positioning. Specifically, SYNE2 and SUN2 assemble in arrays of transmembrane actin-associated nuclear (TAN) lines which are bound to F-actin cables and couple the nucleus to retrograde actin flow during actin-dependent nuclear movement. May be involved in nucleus-centrosome attachment. During interkinetic nuclear migration (INM) at G2 phase and nuclear migration in neural progenitors its LINC complex association with SUN1/2 and probable association with cytoplasmic dynein-dynactin motor complexes functions to pull the nucleus toward the centrosome; SYNE1 and SYNE2 may act redundantly. During INM at G1 phase mediates respective LINC complex association with kinesin to push the nucleus away from the centrosome. Involved in nuclear migration in retinal photoreceptor progenitors. Required for centrosome migration to the apical cell surface during early ciliogenesis. Facilitates the relaxation of mechanical stress imposed by compressive actin fibers at the rupture site through its nteraction with SYN2. This Homo sapiens (Human) protein is Nesprin-2.